The following is a 360-amino-acid chain: DNA replication and repair protein RecF (360 aa).

30-37 (GHNGSGKT) is an ATP binding site.

It belongs to the RecF family.

The protein localises to the cytoplasm. In terms of biological role, the RecF protein is involved in DNA metabolism; it is required for DNA replication and normal SOS inducibility. RecF binds preferentially to single-stranded, linear DNA. It also seems to bind ATP. The chain is DNA replication and repair protein RecF from Haemophilus ducreyi (strain 35000HP / ATCC 700724).